The primary structure comprises 188 residues: Elongation factor P (188 aa).

Lys-34 bears the N6-(3,6-diaminohexanoyl)-5-hydroxylysine mark.

This sequence belongs to the elongation factor P family. In terms of processing, may be beta-lysylated on the epsilon-amino group of Lys-34 by the combined action of EpmA and EpmB, and then hydroxylated on the C5 position of the same residue by EpmC (if this protein is present). Lysylation is critical for the stimulatory effect of EF-P on peptide-bond formation. The lysylation moiety may extend toward the peptidyltransferase center and stabilize the terminal 3-CCA end of the tRNA. Hydroxylation of the C5 position on Lys-34 may allow additional potential stabilizing hydrogen-bond interactions with the P-tRNA.

The protein resides in the cytoplasm. The protein operates within protein biosynthesis; polypeptide chain elongation. Functionally, involved in peptide bond synthesis. Alleviates ribosome stalling that occurs when 3 or more consecutive Pro residues or the sequence PPG is present in a protein, possibly by augmenting the peptidyl transferase activity of the ribosome. Modification of Lys-34 is required for alleviation. This Glaesserella parasuis serovar 5 (strain SH0165) (Haemophilus parasuis) protein is Elongation factor P.